Here is a 229-residue protein sequence, read N- to C-terminus: Ribonuclease 3 (229 aa).

The region spanning 4–133 (WEELQESVGF…FIGALYLDNG (130 aa)) is the RNase III domain. Mg(2+) is bound at residue Glu-46. Residue Asp-50 is part of the active site. The Mg(2+) site is built by Asp-119 and Glu-122. Residue Glu-122 is part of the active site. The region spanning 159 to 228 (DYKTQLQEIV…AQFAINQLTH (70 aa)) is the DRBM domain.

This sequence belongs to the ribonuclease III family. In terms of assembly, homodimer. The cofactor is Mg(2+).

The protein resides in the cytoplasm. The enzyme catalyses Endonucleolytic cleavage to 5'-phosphomonoester.. In terms of biological role, digests double-stranded RNA. Involved in the processing of primary rRNA transcript to yield the immediate precursors to the large and small rRNAs (23S and 16S). Processes some mRNAs, and tRNAs when they are encoded in the rRNA operon. Processes pre-crRNA and tracrRNA of type II CRISPR loci if present in the organism. In Listeria innocua serovar 6a (strain ATCC BAA-680 / CLIP 11262), this protein is Ribonuclease 3.